A 256-amino-acid polypeptide reads, in one-letter code: Large ribosomal subunit protein eL8B (256 aa).

A disordered region spans residues 1 to 37; sequence MAPGKKVAPAPFGAKSTKSNKAKNPLTHSTPKNFGIG.

This sequence belongs to the eukaryotic ribosomal protein eL8 family. In terms of assembly, component of the large ribosomal subunit (LSU). Mature yeast ribosomes consist of a small (40S) and a large (60S) subunit. The 40S small subunit contains 1 molecule of ribosomal RNA (18S rRNA) and 33 different proteins (encoded by 57 genes). The large 60S subunit contains 3 rRNA molecules (25S, 5.8S and 5S rRNA) and 46 different proteins (encoded by 81 genes).

The protein resides in the cytoplasm. Functionally, component of the ribosome, a large ribonucleoprotein complex responsible for the synthesis of proteins in the cell. The small ribosomal subunit (SSU) binds messenger RNAs (mRNAs) and translates the encoded message by selecting cognate aminoacyl-transfer RNA (tRNA) molecules. The large subunit (LSU) contains the ribosomal catalytic site termed the peptidyl transferase center (PTC), which catalyzes the formation of peptide bonds, thereby polymerizing the amino acids delivered by tRNAs into a polypeptide chain. The nascent polypeptides leave the ribosome through a tunnel in the LSU and interact with protein factors that function in enzymatic processing, targeting, and the membrane insertion of nascent chains at the exit of the ribosomal tunnel. This is Large ribosomal subunit protein eL8B from Saccharomyces cerevisiae (strain ATCC 204508 / S288c) (Baker's yeast).